Here is a 1368-residue protein sequence, read N- to C-terminus: DNA-directed RNA polymerase subunit beta (1368 aa).

The protein belongs to the RNA polymerase beta chain family. The RNAP catalytic core consists of 2 alpha, 1 beta, 1 beta' and 1 omega subunit. When a sigma factor is associated with the core the holoenzyme is formed, which can initiate transcription.

It carries out the reaction RNA(n) + a ribonucleoside 5'-triphosphate = RNA(n+1) + diphosphate. DNA-dependent RNA polymerase catalyzes the transcription of DNA into RNA using the four ribonucleoside triphosphates as substrates. The sequence is that of DNA-directed RNA polymerase subunit beta from Burkholderia ambifaria (strain MC40-6).